The chain runs to 357 residues: Acyl-coenzyme A diphosphatase NUDT19 (357 aa).

One can recognise a Nudix hydrolase domain in the interval 10-242; the sequence is AATVMLAAGW…IWLAPPQFYE (233 aa). Residues 72-93 are disordered; the sequence is PRFGLGPEPPRQPPFPGLSHGD. Residues 78-87 show a composition bias toward pro residues; that stretch reads PEPPRQPPFP. A Nudix box motif is present at residues 97–118; the sequence is AALPDDVALRICAIREAFEEAG. The Mg(2+) site is built by E112 and E116. The residue at position 300 (K300) is an N6-succinyllysine. A Microbody targeting signal motif is present at residues 355–357; sequence AHL.

The protein belongs to the Nudix hydrolase family. In terms of assembly, monomer. Requires Mg(2+) as cofactor. The cofactor is Mn(2+). In terms of tissue distribution, highly expressed in the kidneys, with lower levels in skeletal muscle and brain (at protein level).

It localises to the peroxisome. It catalyses the reaction an acyl-CoA + H2O = an acyl-4'-phosphopantetheine + adenosine 3',5'-bisphosphate + 2 H(+). The catalysed reaction is CoA + H2O = (R)-4'-phosphopantetheine + adenosine 3',5'-bisphosphate + 2 H(+). It carries out the reaction hexanoyl-CoA + H2O = hexanoyl-4'-phosphopantetheine + adenosine 3',5'-bisphosphate + 2 H(+). The enzyme catalyses octanoyl-CoA + H2O = S-octanoyl-4'-phosphopantetheine + adenosine 3',5'-bisphosphate + 2 H(+). It catalyses the reaction butanoyl-CoA + H2O = S-butanoyl-4'-phosphopantetheine + adenosine 3',5'-bisphosphate + 2 H(+). The catalysed reaction is propanoyl-CoA + H2O = propanoyl-4'-phosphopantetheine + adenosine 3',5'-bisphosphate + 2 H(+). It carries out the reaction malonyl-CoA + H2O = malonyl-4'-phosphopantetheine + adenosine 3',5'-bisphosphate + 2 H(+). The enzyme catalyses succinyl-CoA + H2O = succinyl-4'-phosphopantetheine + adenosine 3',5'-bisphosphate + 2 H(+). It catalyses the reaction choloyl-CoA + H2O = S-choloyl-4'-phosphopantetheine + adenosine 3',5'-bisphosphate + 2 H(+). The catalysed reaction is 4,8-dimethylnonanoyl-CoA + H2O = S-(4,8-dimethylnonanoyl)-4'-phosphopantetheine + adenosine 3',5'-bisphosphate + 2 H(+). It carries out the reaction (9Z,12Z,15Z)-octadecatrienoyl-CoA + H2O = S-(9Z,12Z,15Z-octadecatrienoyl)-4'-phosphopantetheine + adenosine 3',5'-bisphosphate + 2 H(+). The enzyme catalyses (9Z,12Z)-octadecadienoyl-CoA + H2O = S-(9Z,12Z-octadecadienoyl)-4'-phosphopantetheine + adenosine 3',5'-bisphosphate + 2 H(+). It catalyses the reaction (9Z)-hexadecenoyl-CoA + H2O = S-(9Z-hexadecenoyl)-4'-phosphopantetheine + adenosine 3',5'-bisphosphate + 2 H(+). The catalysed reaction is (9Z)-tetradecenoyl-CoA + H2O = S-(9Z-tetradecenoyl)-4'-phosphopantetheine + adenosine 3',5'-bisphosphate + 2 H(+). It carries out the reaction (6Z)-octenoyl-CoA + H2O = S-(6Z-octenoyl)-4'-phosphopantetheine + adenosine 3',5'-bisphosphate + 2 H(+). The enzyme catalyses hexadecanoyl-CoA + H2O = S-hexadecanoyl-4'-phosphopantetheine + adenosine 3',5'-bisphosphate + 2 H(+). It catalyses the reaction tetradecanoyl-CoA + H2O = tetradecanoyl-4'-phosphopantetheine + adenosine 3',5'-bisphosphate + 2 H(+). The catalysed reaction is dodecanoyl-CoA + H2O = S-dodecanoyl-4'-phosphopantetheine + adenosine 3',5'-bisphosphate + 2 H(+). It carries out the reaction a 5'-end CoA-ribonucleoside in mRNA + H2O = a 5'-end phospho-adenosine-phospho-ribonucleoside in mRNA + (R)-4'-phosphopantetheine + 2 H(+). Its activity is regulated as follows. Inhibited by chenodeoxycholic acid (CDCA) and its conjugated derivatives, taurochenodeoxycholic acid and glycochenodeoxycholic acid. Inhibited by fluoride. Fatty acyl-coenzyme A (CoA) diphosphatase that hydrolyzes fatty acyl-CoA to yield acyl-4'-phosphopantetheine and adenosine 3',5'-bisphosphate. Mediates the hydrolysis of a wide range of CoA esters, including choloyl-CoA and branched-chain fatty-acyl-CoA esters and at low substrate concentrations medium and long-chain fatty-acyl-CoA esters are the primary substrates. Highest activity seen with medium-chain acyl-CoA esters and higher rates of activity seen with the unsaturated acyl-CoA esters compared with the saturated esters. Exhibits decapping activity towards dpCoA-capped RNAs in vitro. This Mus musculus (Mouse) protein is Acyl-coenzyme A diphosphatase NUDT19 (Nudt19).